Reading from the N-terminus, the 51-residue chain is Methionine aminopeptidase (51 aa).

This sequence belongs to the peptidase M24A family. Methionine aminopeptidase type 1 subfamily. Monomer. The cofactor is Co(2+). It depends on Zn(2+) as a cofactor. Mn(2+) is required as a cofactor. Requires Fe(2+) as cofactor.

The enzyme catalyses Release of N-terminal amino acids, preferentially methionine, from peptides and arylamides.. In terms of biological role, removes the N-terminal methionine from nascent proteins. The N-terminal methionine is often cleaved when the second residue in the primary sequence is small and uncharged (Met-Ala-, Cys, Gly, Pro, Ser, Thr, or Val). Requires deformylation of the N(alpha)-formylated initiator methionine before it can be hydrolyzed. This is Methionine aminopeptidase (map) from Geobacillus stearothermophilus (Bacillus stearothermophilus).